Consider the following 346-residue polypeptide: Holliday junction branch migration complex subunit RuvB (346 aa).

The interval 1 to 182 (MSEPARLISP…FGIPVRLSFY (182 aa)) is large ATPase domain (RuvB-L). Residues Leu21, Arg22, Gly63, Lys66, Thr67, Thr68, 129-131 (EDF), Arg172, Tyr182, and Arg219 each bind ATP. A Mg(2+)-binding site is contributed by Thr67. The small ATPAse domain (RuvB-S) stretch occupies residues 183 to 253 (TVEELELIVR…IADEALTRLL (71 aa)). The interval 256-346 (NVGFDQLDKR…AQFRLFQEDN (91 aa)) is head domain (RuvB-H). The DNA site is built by Arg292, Arg311, and Arg316.

It belongs to the RuvB family. In terms of assembly, homohexamer. Forms an RuvA(8)-RuvB(12)-Holliday junction (HJ) complex. HJ DNA is sandwiched between 2 RuvA tetramers; dsDNA enters through RuvA and exits via RuvB. An RuvB hexamer assembles on each DNA strand where it exits the tetramer. Each RuvB hexamer is contacted by two RuvA subunits (via domain III) on 2 adjacent RuvB subunits; this complex drives branch migration. In the full resolvosome a probable DNA-RuvA(4)-RuvB(12)-RuvC(2) complex forms which resolves the HJ.

It localises to the cytoplasm. It carries out the reaction ATP + H2O = ADP + phosphate + H(+). Functionally, the RuvA-RuvB-RuvC complex processes Holliday junction (HJ) DNA during genetic recombination and DNA repair, while the RuvA-RuvB complex plays an important role in the rescue of blocked DNA replication forks via replication fork reversal (RFR). RuvA specifically binds to HJ cruciform DNA, conferring on it an open structure. The RuvB hexamer acts as an ATP-dependent pump, pulling dsDNA into and through the RuvAB complex. RuvB forms 2 homohexamers on either side of HJ DNA bound by 1 or 2 RuvA tetramers; 4 subunits per hexamer contact DNA at a time. Coordinated motions by a converter formed by DNA-disengaged RuvB subunits stimulates ATP hydrolysis and nucleotide exchange. Immobilization of the converter enables RuvB to convert the ATP-contained energy into a lever motion, pulling 2 nucleotides of DNA out of the RuvA tetramer per ATP hydrolyzed, thus driving DNA branch migration. The RuvB motors rotate together with the DNA substrate, which together with the progressing nucleotide cycle form the mechanistic basis for DNA recombination by continuous HJ branch migration. Branch migration allows RuvC to scan DNA until it finds its consensus sequence, where it cleaves and resolves cruciform DNA. In Rhizobium johnstonii (strain DSM 114642 / LMG 32736 / 3841) (Rhizobium leguminosarum bv. viciae), this protein is Holliday junction branch migration complex subunit RuvB.